A 182-amino-acid chain; its full sequence is Ribosome maturation factor RimM (182 aa).

Residues 106-179 (EGEFHVLDLI…RIEITPPPGL (74 aa)) form the PRC barrel domain.

It belongs to the RimM family. Binds ribosomal protein uS19.

Its subcellular location is the cytoplasm. In terms of biological role, an accessory protein needed during the final step in the assembly of 30S ribosomal subunit, possibly for assembly of the head region. Essential for efficient processing of 16S rRNA. May be needed both before and after RbfA during the maturation of 16S rRNA. It has affinity for free ribosomal 30S subunits but not for 70S ribosomes. This is Ribosome maturation factor RimM from Synechococcus elongatus (strain ATCC 33912 / PCC 7942 / FACHB-805) (Anacystis nidulans R2).